The sequence spans 622 residues: Cilia- and flagella-associated protein 206 (622 aa).

Residues 568-593 (NTSQVYPLKEASTQSKREGSSRVPRP) are disordered.

It belongs to the CFAP206 family. Expressed in the sperm, oviduct, lung, nasal cavity, brain ependyma and choroid plexus.

The protein localises to the cytoplasm. It is found in the cytoskeleton. It localises to the cilium axoneme. The protein resides in the cilium basal body. In terms of biological role, essential for sperm motility and is involved in the regulation of the beating frequency of motile cilia on the epithelial cells of the respiratory tract. Required for the establishment of radial spokes in sperm flagella. The polypeptide is Cilia- and flagella-associated protein 206 (Mus musculus (Mouse)).